The sequence spans 98 residues: Prolactin-releasing peptide (98 aa).

The first 22 residues, 1–22, serve as a signal peptide directing secretion; that stretch reads MKAVGAWLLCLLLLGLALQGAA. Disordered regions lie at residues 52 to 71 and 79 to 98; these read RFGR…PRRV and GGAE…LVQE. F53 carries the post-translational modification Phenylalanine amide. Residues 58-98 constitute a propeptide that is removed on maturation; it reads AAPGDGPRPGPRRVPACFRLEGGAEPSRALPGRLTAQLVQE.

Amidation of C-terminus is required for receptor interaction. In terms of tissue distribution, medulla oblongata and hypothalamus.

Its subcellular location is the secreted. In terms of biological role, stimulates prolactin (PRL) release and regulates the expression of prolactin through its receptor GPR10. May stimulate lactotrophs directly to secrete PRL. This is Prolactin-releasing peptide (PRLH) from Bos taurus (Bovine).